A 236-amino-acid chain; its full sequence is 5'-methylthioadenosine/S-adenosylhomocysteine nucleosidase (236 aa).

The active-site Proton acceptor is glutamate 12. Residues glycine 78, isoleucine 153, and 174-175 contribute to the substrate site; that span reads ME. The active-site Proton donor is the aspartate 198.

It belongs to the PNP/UDP phosphorylase family. MtnN subfamily.

The enzyme catalyses S-adenosyl-L-homocysteine + H2O = S-(5-deoxy-D-ribos-5-yl)-L-homocysteine + adenine. It carries out the reaction S-methyl-5'-thioadenosine + H2O = 5-(methylsulfanyl)-D-ribose + adenine. It catalyses the reaction 5'-deoxyadenosine + H2O = 5-deoxy-D-ribose + adenine. It functions in the pathway amino-acid biosynthesis; L-methionine biosynthesis via salvage pathway; S-methyl-5-thio-alpha-D-ribose 1-phosphate from S-methyl-5'-thioadenosine (hydrolase route): step 1/2. Functionally, catalyzes the irreversible cleavage of the glycosidic bond in both 5'-methylthioadenosine (MTA) and S-adenosylhomocysteine (SAH/AdoHcy) to adenine and the corresponding thioribose, 5'-methylthioribose and S-ribosylhomocysteine, respectively. Also cleaves 5'-deoxyadenosine, a toxic by-product of radical S-adenosylmethionine (SAM) enzymes, into 5-deoxyribose and adenine. The chain is 5'-methylthioadenosine/S-adenosylhomocysteine nucleosidase from Shewanella baltica (strain OS185).